The chain runs to 239 residues: Probable 2-phosphosulfolactate phosphatase (239 aa).

The protein belongs to the ComB family. Mg(2+) is required as a cofactor.

It catalyses the reaction (2R)-O-phospho-3-sulfolactate + H2O = (2R)-3-sulfolactate + phosphate. In Clostridium botulinum (strain Okra / Type B1), this protein is Probable 2-phosphosulfolactate phosphatase.